A 66-amino-acid chain; its full sequence is Large ribosomal subunit protein bL35 (66 aa).

The span at 1–26 (MPKMKTHRGAAKRVKRTGSGKLKRSR) shows a compositional bias: basic residues. Positions 1–49 (MPKMKTHRGAAKRVKRTGSGKLKRSRAFTSHLFANKSTKQKRKLRKASL) are disordered.

The protein belongs to the bacterial ribosomal protein bL35 family.

The chain is Large ribosomal subunit protein bL35 from Staphylococcus saprophyticus subsp. saprophyticus (strain ATCC 15305 / DSM 20229 / NCIMB 8711 / NCTC 7292 / S-41).